Here is a 157-residue protein sequence, read N- to C-terminus: Transcription antitermination protein NusB (157 aa).

This sequence belongs to the NusB family.

Its function is as follows. Involved in transcription antitermination. Required for transcription of ribosomal RNA (rRNA) genes. Binds specifically to the boxA antiterminator sequence of the ribosomal RNA (rrn) operons. The polypeptide is Transcription antitermination protein NusB (Xylella fastidiosa (strain 9a5c)).